A 135-amino-acid polypeptide reads, in one-letter code: Kappa-casein (135 aa).

Thr96 carries an O-linked (GalNAc...) threonine glycan. The residue at position 114 (Ser114) is a Phosphoserine; alternate. Ser114 carries O-linked (GalNAc...) serine; alternate glycosylation. O-linked (GalNAc...) threonine glycosylation is present at Thr131. Ser132 is subject to Phosphoserine.

The protein belongs to the kappa-casein family. Mammary gland specific. Secreted in milk.

Its subcellular location is the secreted. In terms of biological role, kappa-casein stabilizes micelle formation, preventing casein precipitation in milk. This chain is Kappa-casein (CSN3), found in Equus grevyi (Grevy's zebra).